The following is a 476-amino-acid chain: MGIDAGTTATPRTLAEKVWDDHVVVSGGANEPDLIYIDLHLVHEVTSPQAFDGLRLAGRPVRRPDLTLATEDHNVPTIDIDKPIADPVSRTQVETLRRNCAEFGVRLYPMGDAEQGIVHVVGPQLGLTQPGMTVVCGDSHTSTHGAFGALAMGIGTSEVEHVLATQTLPLRPFKTMAVNVDGELPAGVTAKDIILALIAKIGTGGGQGHVIEYRGSAIESLSMEGRMTVCNMSIEAGARAGMIAPDDTTYEFLRDRPHAPKGAQWDAAMRYWQQLRTDPGAVFDTEVYLDAASLSPFVTWGTNPGQGVPLAAAVPDPELMTDDAERQAAEKALAYMDLRPGTPMRDIAVDAVFVGSCTNGRIEDLRVVADVLRGRKVAPGVRMLVVPGSMRVRAQAEAEGLGEVFTAAGAEWRQAGCSMCLGMNPDQLAPGERCAATSNRNFEGRQGKGGRTHLVSPAVAAATAVRGTLSAPADLD.

[4Fe-4S] cluster-binding residues include cysteine 357, cysteine 417, and cysteine 420.

Belongs to the aconitase/IPM isomerase family. LeuC type 1 subfamily. In terms of assembly, heterodimer of LeuC and LeuD. The cofactor is [4Fe-4S] cluster.

The enzyme catalyses (2R,3S)-3-isopropylmalate = (2S)-2-isopropylmalate. The protein operates within amino-acid biosynthesis; L-leucine biosynthesis; L-leucine from 3-methyl-2-oxobutanoate: step 2/4. Functionally, catalyzes the isomerization between 2-isopropylmalate and 3-isopropylmalate, via the formation of 2-isopropylmaleate. The chain is 3-isopropylmalate dehydratase large subunit from Mycobacterium avium (strain 104).